We begin with the raw amino-acid sequence, 167 residues long: N5-carboxyaminoimidazole ribonucleotide mutase (167 aa).

The substrate site is built by Ser11, Asp14, and Arg41.

This sequence belongs to the AIR carboxylase family. Class I subfamily.

The catalysed reaction is 5-carboxyamino-1-(5-phospho-D-ribosyl)imidazole + H(+) = 5-amino-1-(5-phospho-D-ribosyl)imidazole-4-carboxylate. Its pathway is purine metabolism; IMP biosynthesis via de novo pathway; 5-amino-1-(5-phospho-D-ribosyl)imidazole-4-carboxylate from 5-amino-1-(5-phospho-D-ribosyl)imidazole (N5-CAIR route): step 2/2. Its function is as follows. Catalyzes the conversion of N5-carboxyaminoimidazole ribonucleotide (N5-CAIR) to 4-carboxy-5-aminoimidazole ribonucleotide (CAIR). In Aquifex aeolicus (strain VF5), this protein is N5-carboxyaminoimidazole ribonucleotide mutase.